The primary structure comprises 761 residues: Phosphoribosylformylglycinamidine synthase subunit PurL (761 aa).

The active site involves His-48. 2 residues coordinate ATP: Tyr-51 and Lys-90. Position 92 (Glu-92) interacts with Mg(2+). Substrate contacts are provided by residues 93 to 96 (SHNH) and Arg-115. The Proton acceptor role is filled by His-94. Mg(2+) is bound at residue Asp-116. Gln-239 contacts substrate. Residue Asp-267 participates in Mg(2+) binding. Position 311 to 313 (311 to 313 (ESQ)) interacts with substrate. ATP contacts are provided by Asp-499 and Gly-536. Residue Asn-537 participates in Mg(2+) binding. Ser-539 lines the substrate pocket.

Belongs to the FGAMS family. As to quaternary structure, monomer. Part of the FGAM synthase complex composed of 1 PurL, 1 PurQ and 2 PurS subunits.

Its subcellular location is the cytoplasm. The catalysed reaction is N(2)-formyl-N(1)-(5-phospho-beta-D-ribosyl)glycinamide + L-glutamine + ATP + H2O = 2-formamido-N(1)-(5-O-phospho-beta-D-ribosyl)acetamidine + L-glutamate + ADP + phosphate + H(+). The protein operates within purine metabolism; IMP biosynthesis via de novo pathway; 5-amino-1-(5-phospho-D-ribosyl)imidazole from N(2)-formyl-N(1)-(5-phospho-D-ribosyl)glycinamide: step 1/2. Its function is as follows. Part of the phosphoribosylformylglycinamidine synthase complex involved in the purines biosynthetic pathway. Catalyzes the ATP-dependent conversion of formylglycinamide ribonucleotide (FGAR) and glutamine to yield formylglycinamidine ribonucleotide (FGAM) and glutamate. The FGAM synthase complex is composed of three subunits. PurQ produces an ammonia molecule by converting glutamine to glutamate. PurL transfers the ammonia molecule to FGAR to form FGAM in an ATP-dependent manner. PurS interacts with PurQ and PurL and is thought to assist in the transfer of the ammonia molecule from PurQ to PurL. The sequence is that of Phosphoribosylformylglycinamidine synthase subunit PurL from Thermosynechococcus vestitus (strain NIES-2133 / IAM M-273 / BP-1).